The sequence spans 234 residues: Probable RNA/DNA demethylase ALKBH6 (234 aa).

The region spanning 96-222 is the Fe2OG dioxygenase domain; the sequence is TANHVLVNEY…RVSLTIRHVP (127 aa). Positions 103 and 105 each coordinate 2-oxoglutarate. Fe cation contacts are provided by H114, D116, and H180. The 2-oxoglutarate site is built by R213 and S215.

The protein belongs to the alkB family. Fe(2+) is required as a cofactor.

Its subcellular location is the cytoplasm. It localises to the nucleus. In terms of biological role, probable Fe(2+)/2-oxoglutarate-dependent dioxygenase involved in oxidative demethylation of nucleic acids. Binds nucleic acids with a preference for ssDNA or ssRNA to other types of DNAs. May play a role in nucleic acid damage repair. This Danio rerio (Zebrafish) protein is Probable RNA/DNA demethylase ALKBH6 (alkbh6).